A 90-amino-acid polypeptide reads, in one-letter code: Small ribosomal subunit protein bS20 (90 aa).

It belongs to the bacterial ribosomal protein bS20 family.

In terms of biological role, binds directly to 16S ribosomal RNA. The protein is Small ribosomal subunit protein bS20 of Rickettsia felis (strain ATCC VR-1525 / URRWXCal2) (Rickettsia azadi).